Reading from the N-terminus, the 114-residue chain is SCP2 domain-containing protein YusD (114 aa).

Residues 21–101 (NASTLLITFQ…RALLKLEAIL (81 aa)) enclose the SCP2 domain.

The protein is SCP2 domain-containing protein YusD (yusD) of Bacillus subtilis (strain 168).